A 168-amino-acid chain; its full sequence is MGSAYHWEARRRQMALDRRRWLMAQQQQELQQKEQELKNHQEEEQQSEEKLQPHKKLNVPQPPVAKLWTSQEQPQPSQQQPSVQPPSQPPPQPSTLPQAQVWPGPQPPQPQPPPQPTQPSAQARCTQHTSKCNLQDSQRPGLMNPCQSSPIRNTGYSQLKSTNYIQQW.

Residues Leu-16–Lys-50 are a coiled coil. A disordered region spans residues Met-23–Trp-168. Residues Gln-31 to Gln-52 show a composition bias toward basic and acidic residues. The segment covering Ser-70–Ser-82 has biased composition (low complexity). Pro residues-rich tracts occupy residues Val-83–Ser-94 and Gly-104–Thr-117. Polar residues-rich tracts occupy residues Arg-124–Gln-138 and Pro-145–Trp-168.

This chain is Coiled-coil domain-containing protein 200, found in Homo sapiens (Human).